The primary structure comprises 277 residues: Diaminopimelate epimerase (277 aa).

Residues asparagine 13, glutamine 46, and asparagine 65 each contribute to the substrate site. Cysteine 74 acts as the Proton donor in catalysis. Residues 75–76 (GN), asparagine 158, asparagine 191, and 209–210 (ER) each bind substrate. The active-site Proton acceptor is cysteine 218. Substrate is bound at residue 219 to 220 (GT).

It belongs to the diaminopimelate epimerase family. As to quaternary structure, homodimer.

It is found in the cytoplasm. It catalyses the reaction (2S,6S)-2,6-diaminopimelate = meso-2,6-diaminopimelate. It participates in amino-acid biosynthesis; L-lysine biosynthesis via DAP pathway; DL-2,6-diaminopimelate from LL-2,6-diaminopimelate: step 1/1. Catalyzes the stereoinversion of LL-2,6-diaminopimelate (L,L-DAP) to meso-diaminopimelate (meso-DAP), a precursor of L-lysine and an essential component of the bacterial peptidoglycan. The protein is Diaminopimelate epimerase of Nitrosospira multiformis (strain ATCC 25196 / NCIMB 11849 / C 71).